Here is an 872-residue protein sequence, read N- to C-terminus: FHIP family protein CBG19667 (872 aa).

A disordered region spans residues 800 to 841 (SRSSPRSADEHDSTLFYGRSTIPPPGRKPLLREPSHQETLDD). Basic and acidic residues predominate over residues 829–841 (LLREPSHQETLDD).

This sequence belongs to the FHIP family.

This Caenorhabditis briggsae protein is FHIP family protein CBG19667.